A 248-amino-acid chain; its full sequence is Tryptophan synthase alpha chain (248 aa).

Residues glutamate 36 and aspartate 47 each act as proton acceptor in the active site.

Belongs to the TrpA family. As to quaternary structure, tetramer of two alpha and two beta chains.

The enzyme catalyses (1S,2R)-1-C-(indol-3-yl)glycerol 3-phosphate + L-serine = D-glyceraldehyde 3-phosphate + L-tryptophan + H2O. The protein operates within amino-acid biosynthesis; L-tryptophan biosynthesis; L-tryptophan from chorismate: step 5/5. The alpha subunit is responsible for the aldol cleavage of indoleglycerol phosphate to indole and glyceraldehyde 3-phosphate. This Archaeoglobus fulgidus (strain ATCC 49558 / DSM 4304 / JCM 9628 / NBRC 100126 / VC-16) protein is Tryptophan synthase alpha chain.